Consider the following 434-residue polypeptide: 3-phosphoshikimate 1-carboxyvinyltransferase (434 aa).

Positions 22, 23, and 27 each coordinate 3-phosphoshikimate. Residue lysine 22 coordinates phosphoenolpyruvate. Phosphoenolpyruvate is bound by residues glycine 93 and arginine 121. The 3-phosphoshikimate site is built by serine 168, serine 169, glutamine 170, serine 199, aspartate 320, and lysine 347. Glutamine 170 provides a ligand contact to phosphoenolpyruvate. Catalysis depends on aspartate 320, which acts as the Proton acceptor. Residues arginine 351, arginine 395, and lysine 420 each coordinate phosphoenolpyruvate.

It belongs to the EPSP synthase family. In terms of assembly, monomer.

The protein localises to the cytoplasm. It carries out the reaction 3-phosphoshikimate + phosphoenolpyruvate = 5-O-(1-carboxyvinyl)-3-phosphoshikimate + phosphate. It participates in metabolic intermediate biosynthesis; chorismate biosynthesis; chorismate from D-erythrose 4-phosphate and phosphoenolpyruvate: step 6/7. Its function is as follows. Catalyzes the transfer of the enolpyruvyl moiety of phosphoenolpyruvate (PEP) to the 5-hydroxyl of shikimate-3-phosphate (S3P) to produce enolpyruvyl shikimate-3-phosphate and inorganic phosphate. The chain is 3-phosphoshikimate 1-carboxyvinyltransferase from Cupriavidus necator (strain ATCC 17699 / DSM 428 / KCTC 22496 / NCIMB 10442 / H16 / Stanier 337) (Ralstonia eutropha).